The chain runs to 126 residues: Fluoride-specific ion channel FluC (126 aa).

The next 4 membrane-spanning stretches (helical) occupy residues Pro-4–Leu-24, Ile-33–Ala-53, Phe-67–Val-87, and Met-97–Leu-117. Na(+) is bound by residues Gly-74 and Thr-77.

Belongs to the fluoride channel Fluc/FEX (TC 1.A.43) family.

The protein resides in the cell inner membrane. The enzyme catalyses fluoride(in) = fluoride(out). Its activity is regulated as follows. Na(+) is not transported, but it plays an essential structural role and its presence is essential for fluoride channel function. Its function is as follows. Fluoride-specific ion channel. Important for reducing fluoride concentration in the cell, thus reducing its toxicity. The polypeptide is Fluoride-specific ion channel FluC (Acinetobacter baumannii (strain ATCC 17978 / DSM 105126 / CIP 53.77 / LMG 1025 / NCDC KC755 / 5377)).